Reading from the N-terminus, the 141-residue chain is Large ribosomal subunit protein uL11 (141 aa).

It belongs to the universal ribosomal protein uL11 family. Part of the ribosomal stalk of the 50S ribosomal subunit. Interacts with L10 and the large rRNA to form the base of the stalk. L10 forms an elongated spine to which L12 dimers bind in a sequential fashion forming a multimeric L10(L12)X complex. One or more lysine residues are methylated.

In terms of biological role, forms part of the ribosomal stalk which helps the ribosome interact with GTP-bound translation factors. The sequence is that of Large ribosomal subunit protein uL11 from Chlamydia muridarum (strain MoPn / Nigg).